Here is a 311-residue protein sequence, read N- to C-terminus: HTH-type transcriptional regulator DsdC (311 aa).

One can recognise an HTH lysR-type domain in the interval 15 to 72 (WQLSKMHTFEVAARHQSFALAAEELSLSPSAVSHRINQLEEELGIQLFVRSHRKVELT). A DNA-binding region (H-T-H motif) is located at residues 32 to 51 (FALAAEELSLSPSAVSHRIN).

Belongs to the LysR transcriptional regulatory family.

Functionally, regulates the expression of the dsdX-dsdA operon. In Escherichia coli (strain K12), this protein is HTH-type transcriptional regulator DsdC.